A 64-amino-acid chain; its full sequence is Putative antitoxin VapB4 (64 aa).

This sequence belongs to the UPF0165 family.

Possibly the antitoxin component of a type II toxin-antitoxin (TA) system. Its cognate toxin is VapC4 (Potential). The sequence is that of Putative antitoxin VapB4 (vapB4) from Archaeoglobus fulgidus (strain ATCC 49558 / DSM 4304 / JCM 9628 / NBRC 100126 / VC-16).